A 542-amino-acid chain; its full sequence is Cytochrome P450 monooxygenase sdnH (542 aa).

A helical membrane pass occupies residues 25-45 (LYVAGGILGAFTVYSIILVVY). The interval 141-160 (IIPPRGLGQEDSIGSTRSHD) is disordered. Residues 340-360 (FMGAGTYPTAATLIFVAYYIL) traverse the membrane as a helical segment. C483 contacts heme. N506 is a glycosylation site (N-linked (GlcNAc...) asparagine).

Belongs to the cytochrome P450 family. It depends on heme as a cofactor.

Its subcellular location is the membrane. It participates in antibiotic biosynthesis. In terms of biological role, cytochrome P450 monooxygenase; part of the gene cluster that mediates the biosynthesis of sordarin and hypoxysordarin, glycoside antibiotics with a unique tetracyclic diterpene aglycone structure. First, the geranylgeranyl diphosphate synthase sdnC constructs GGDP from farnesyl diphosphate and isopentenyl diphosphate. The diterpene cyclase sdnA then catalyzes the cyclization of GGDP to afford cycloaraneosene. Cycloaraneosene is then hydroxylated four times by the putative cytochrome P450 monooxygenases sdnB, sdnE, sdnF and sdnH to give a hydroxylated cycloaraneosene derivative such as cycloaraneosene-8,9,13,19-tetraol. Although the order of the hydroxylations is unclear, at least C8, C9 and C13 of the cycloaraneosene skeleton are hydroxylated before the sordaricin formation. Dehydration of the 13-hydroxy group of the hydroxylated cycloaraneosene derivative might be catalyzed by an unassigned hypothetical protein such as sdnG and sdnP to construct the cyclopentadiene moiety. The FAD-dependent oxidoreductase sdnN is proposed to catalyze the oxidation at C9 of the hydroxylated cycloaraneosene derivative and also catalyze the Baeyer-Villiger oxidation to give the lactone intermediate. The presumed lactone intermediate would be hydrolyzed to give an acrolein moiety and a carboxylate moiety. Then, [4+2]cycloaddition would occur between the acrolein moiety and the cyclopentadiene moiety to give sordaricin. SdnN might also be involved in the [4+2]cycloaddition after the hypothesized oxidation to accommodate the oxidized product and prompt the [4+2]cycloaddition. GDP-6-deoxy-D-altrose may be biosynthesized from GDP-D-mannose by the putative GDP-mannose-4,6-dehydratase sdnI and the short-chain dehydrogenase sdnK. The glycosyltransferase sdnJ catalyzes the attachment of 6-deoxy-D-altrose onto the 19-hydroxy group of sordaricin to give 4'-O-demethylsordarin. The methyltransferase sdnD would complete the biosynthesis of sordarin. Sordarin can be further modified into hypoxysordarin. The unique acyl chain at the 3'-hydroxy group of hypoxysordarin would be constructed by an iterative type I PKS sdnO and the trans-acting polyketide methyltransferase sdnL. SdnL would be responsible for the introduction of an alpha-methyl group of the polyketide chain. Alternatively, the beta-lactamase-like protein sdnR might be responsible for the cleavage and transfer of the polyketide chain from the PKS sdnO to sordarin. Two putative cytochrome P450 monooxygenases, sdnQ and sdnT, might catalyze the epoxidations of the polyketide chain to complete the biosynthesis of hypoxysordarin. Transcriptional regulators sdnM and sdnS are presumably encoded for the transcriptional regulation of the expression of the sdn gene cluster. The chain is Cytochrome P450 monooxygenase sdnH from Sordaria araneosa (Pleurage araneosa).